A 508-amino-acid polypeptide reads, in one-letter code: Photosystem II CP47 reaction center protein (508 aa).

6 helical membrane passes run 21–36, 101–115, 140–156, 203–218, 237–252, and 457–472; these read AVHI…WAGS, IVFS…IWHW, GIHL…FGAF, IAAG…FHLS, VLSS…AFVV, and SFAL…HGSR.

The protein belongs to the PsbB/PsbC family. PsbB subfamily. In terms of assembly, PSII is composed of 1 copy each of membrane proteins PsbA, PsbB, PsbC, PsbD, PsbE, PsbF, PsbH, PsbI, PsbJ, PsbK, PsbL, PsbM, PsbT, PsbX, PsbY, PsbZ, Psb30/Ycf12, at least 3 peripheral proteins of the oxygen-evolving complex and a large number of cofactors. It forms dimeric complexes. The cofactor is Binds multiple chlorophylls. PSII binds additional chlorophylls, carotenoids and specific lipids..

The protein localises to the plastid. It localises to the chloroplast thylakoid membrane. Its function is as follows. One of the components of the core complex of photosystem II (PSII). It binds chlorophyll and helps catalyze the primary light-induced photochemical processes of PSII. PSII is a light-driven water:plastoquinone oxidoreductase, using light energy to abstract electrons from H(2)O, generating O(2) and a proton gradient subsequently used for ATP formation. This Populus trichocarpa (Western balsam poplar) protein is Photosystem II CP47 reaction center protein.